A 478-amino-acid chain; its full sequence is Glutamate--tRNA ligase (478 aa).

Residues 9 to 19 carry the 'HIGH' region motif; the sequence is PSPTGLLHIGT. The 'KMSKS' region motif lies at 248-252; it reads KLSKR. K251 serves as a coordination point for ATP.

It belongs to the class-I aminoacyl-tRNA synthetase family. Glutamate--tRNA ligase type 1 subfamily. Monomer.

Its subcellular location is the cytoplasm. It catalyses the reaction tRNA(Glu) + L-glutamate + ATP = L-glutamyl-tRNA(Glu) + AMP + diphosphate. In terms of biological role, catalyzes the attachment of glutamate to tRNA(Glu) in a two-step reaction: glutamate is first activated by ATP to form Glu-AMP and then transferred to the acceptor end of tRNA(Glu). The sequence is that of Glutamate--tRNA ligase from Prochlorococcus marinus subsp. pastoris (strain CCMP1986 / NIES-2087 / MED4).